A 237-amino-acid chain; its full sequence is MAHNNNNNINNNNNNNNNNNNNNNKNNNSEYKTNRNLLYKTILNDIENSLQSLIKPQELTNLLEDNINKLKELDGVQPTNTFGNLQNTSTNTTTTTTTTTTTTTTSSPNNNVITPNSNLKQTLSPSVLIEHLNLFGNENFEEGDDEEETSSDSDSSSSSSTSSSSSERVPSKKLKPMAKPRPGGCSICKTQETPYWRKGKDGDKTVYLCNACGLQIYKKKKKEKLSKEKHSIKNVLN.

Low complexity-rich tracts occupy residues 1 to 28 (MAHNNNNNINNNNNNNNNNNNNNNKNNN) and 87 to 118 (NTSTNTTTTTTTTTTTTTTSSPNNNVITPNSN). Disordered regions lie at residues 1-31 (MAHNNNNNINNNNNNNNNNNNNNNKNNNSEY), 78-119 (PTNT…NSNL), and 140-186 (FEEG…GGCS). Residues 140–151 (FEEGDDEEETSS) show a composition bias toward acidic residues. A compositionally biased stretch (low complexity) spans 152–167 (DSDSSSSSSTSSSSSE). A GATA-type zinc finger spans residues 185–212 (CSICKTQETPYWRKGKDGDKTVYLCNAC).

This Dictyostelium discoideum (Social amoeba) protein is GATA zinc finger domain-containing protein 18 (gtaR).